The following is a 253-amino-acid chain: 2,3-bisphosphoglycerate-dependent phosphoglycerate mutase (253 aa).

Substrate-binding positions include 12–19, 25–26, R64, 91–94, K102, 118–119, and 187–188; these read RHGESEWN, TG, ERHY, RR, and GN. H13 functions as the Tele-phosphohistidine intermediate in the catalytic mechanism. E91 serves as the catalytic Proton donor/acceptor.

It belongs to the phosphoglycerate mutase family. BPG-dependent PGAM subfamily.

It carries out the reaction (2R)-2-phosphoglycerate = (2R)-3-phosphoglycerate. Its pathway is carbohydrate degradation; glycolysis; pyruvate from D-glyceraldehyde 3-phosphate: step 3/5. Functionally, catalyzes the interconversion of 2-phosphoglycerate and 3-phosphoglycerate. This chain is 2,3-bisphosphoglycerate-dependent phosphoglycerate mutase, found in Streptomyces griseus subsp. griseus (strain JCM 4626 / CBS 651.72 / NBRC 13350 / KCC S-0626 / ISP 5235).